The sequence spans 529 residues: Bifunctional purine biosynthesis protein PurH (529 aa).

An MGS-like domain is found at 1-148 (MNNARPIRRA…KNHKDTTIIV (148 aa)).

This sequence belongs to the PurH family.

It carries out the reaction (6R)-10-formyltetrahydrofolate + 5-amino-1-(5-phospho-beta-D-ribosyl)imidazole-4-carboxamide = 5-formamido-1-(5-phospho-D-ribosyl)imidazole-4-carboxamide + (6S)-5,6,7,8-tetrahydrofolate. The catalysed reaction is IMP + H2O = 5-formamido-1-(5-phospho-D-ribosyl)imidazole-4-carboxamide. It functions in the pathway purine metabolism; IMP biosynthesis via de novo pathway; 5-formamido-1-(5-phospho-D-ribosyl)imidazole-4-carboxamide from 5-amino-1-(5-phospho-D-ribosyl)imidazole-4-carboxamide (10-formyl THF route): step 1/1. It participates in purine metabolism; IMP biosynthesis via de novo pathway; IMP from 5-formamido-1-(5-phospho-D-ribosyl)imidazole-4-carboxamide: step 1/1. The sequence is that of Bifunctional purine biosynthesis protein PurH from Shewanella pealeana (strain ATCC 700345 / ANG-SQ1).